The sequence spans 244 residues: Protein-L-isoaspartate O-methyltransferase (244 aa).

The interval 1–39 (MINPFSSFRWRHSSRSPAGIPEVEPQPPDASDPFASQRE) is disordered. Ser-92 is an active-site residue.

Belongs to the methyltransferase superfamily. L-isoaspartyl/D-aspartyl protein methyltransferase family.

It localises to the cytoplasm. It catalyses the reaction [protein]-L-isoaspartate + S-adenosyl-L-methionine = [protein]-L-isoaspartate alpha-methyl ester + S-adenosyl-L-homocysteine. Its function is as follows. Catalyzes the methyl esterification of L-isoaspartyl residues in peptides and proteins that result from spontaneous decomposition of normal L-aspartyl and L-asparaginyl residues. It plays a role in the repair and/or degradation of damaged proteins. The sequence is that of Protein-L-isoaspartate O-methyltransferase from Synechococcus sp. (strain JA-2-3B'a(2-13)) (Cyanobacteria bacterium Yellowstone B-Prime).